The chain runs to 380 residues: MMSETIITTPHVVKLISNFFQKKLFSSISTAYPLVIITDVSVQQHLLGPILDHIKMLGYQVIVLTFPPGEPNKTWETFISLQYQLVDQNISPKSSIIGIGGGTVLDMTGFLAATYCRGLPLYLIPTTITAMVDTSIGGKNGINLRGIKNRLGTFYLPKEVWMCPQFLSTLPREEWYHGIAEAIKHGFIADAYLWEFLNSHSKMLFSSSQILHEFIKRNCQIKAAIVAEDPYDRSLRKILNFGHSIAHAIETLAKGTVNHGQAVSVGMMIETRISLAEGVMKTPQLIDQLERLLKRFNLPSTLKDLQSIVPEHLHNSLYSPENIIYTLGYDKKNLSQHELKMIMIEHLGRAAPFNGTYCASPNMEILYDILWSECHVMRHC.

NAD(+) is bound by residues 68 to 73 (PGEPNK), 102 to 106 (GTVLD), 126 to 127 (TT), lysine 139, and lysine 148. Positions 181, 243, and 259 each coordinate Zn(2+).

Belongs to the sugar phosphate cyclases superfamily. Dehydroquinate synthase family. It depends on NAD(+) as a cofactor. Co(2+) serves as cofactor. Zn(2+) is required as a cofactor.

It localises to the cytoplasm. It carries out the reaction 7-phospho-2-dehydro-3-deoxy-D-arabino-heptonate = 3-dehydroquinate + phosphate. It functions in the pathway metabolic intermediate biosynthesis; chorismate biosynthesis; chorismate from D-erythrose 4-phosphate and phosphoenolpyruvate: step 2/7. Catalyzes the conversion of 3-deoxy-D-arabino-heptulosonate 7-phosphate (DAHP) to dehydroquinate (DHQ). This is 3-dehydroquinate synthase (aroB) from Chlamydia pneumoniae (Chlamydophila pneumoniae).